The sequence spans 2448 residues: Cysteine repeat modular protein 1 (2448 aa).

The helical transmembrane segment at 9–29 (TSTNLLNIFALYFSAICFIYC) threads the bilayer. N-linked (GlcNAc...) asparagine glycans are attached at residues N48, N89, N248, N284, N461, N503, N542, N598, and N619. 4 FU repeats span residues 431–481 (KNTC…GYYF), 485–530 (FMQC…GFYI), 535–566 (NFKC…FYLS), and 567–611 (SNTC…GQFA). FU repeat units follow at residues 645–694 (NNQC…GYFP), 698–727 (TSVC…YYLQ), 728–772 (DSNC…GTFG), 775–813 (QNIC…ITNN), 819–868 (KGMC…YYLS), 904–947 (GRVC…GFPD), 950–983 (QNVC…LNPA), 984–1027 (NNIC…RTYP), 1063–1109 (QGAC…NQYV), and 1113–1144 (QNRC…GFYL). N-linked (GlcNAc...) asparagine glycosylation is found at N761 and N812. The N-linked (GlcNAc...) asparagine glycan is linked to N934. N-linked (GlcNAc...) asparagine glycosylation is present at N1002. An N-linked (GlcNAc...) asparagine glycan is attached at N1146. Residues 1147-1193 (QTQCSICDISCLQCSGPGFDSCIQCAQGYYKLGDSVCVQSCPDGFFL) form an FU 15 repeat. N1194 carries an N-linked (GlcNAc...) asparagine glycan. FU repeat units lie at residues 1197–1232 (NNQC…ISNQ), 1234–1279 (GIIC…GYRS), 1281–1332 (KGVC…GTFQ), 1346–1394 (SYYC…GFIL), and 1402–1436 (NQYC…GTVQ). 3 N-linked (GlcNAc...) asparagine glycosylation sites follow: N1296, N1328, and N1365. N-linked (GlcNAc...) asparagine glycosylation is found at N1506, N1601, N1628, and N1670. The 35-residue stretch at 1739–1773 (SDISCSLNLCMNSGKCVPNSIFCSCPSAFTGPKCQ) folds into the EGF-like domain. Cystine bridges form between C1743/C1754, C1748/C1761, and C1763/C1772. N1800, N1849, N1877, N1942, N2117, N2155, and N2179 each carry an N-linked (GlcNAc...) asparagine glycan. 2 consecutive transmembrane segments (helical) span residues 2201–2221 (LYIM…YSAI) and 2238–2258 (IYFL…NQFV). The N-linked (GlcNAc...) asparagine glycan is linked to N2260. The next 4 membrane-spanning stretches (helical) occupy residues 2267 to 2287 (SLTI…ILPF), 2296 to 2316 (ILTS…TIGV), 2352 to 2372 (MIGL…IGLC), and 2386 to 2406 (AVFL…IIVG).

The protein localises to the membrane. Required for mucocyst secretion. The chain is Cysteine repeat modular protein 1 from Tetrahymena thermophila (strain SB210).